Consider the following 602-residue polypeptide: Aspartate--tRNA(Asp/Asn) ligase (602 aa).

Residue E175 coordinates L-aspartate. The tract at residues 199-202 (QIFK) is aspartate. R221 contacts L-aspartate. Residues 221–223 (RDE) and Q230 each bind ATP. Residue H458 coordinates L-aspartate. E492 contributes to the ATP binding site. R499 contributes to the L-aspartate binding site. 544–547 (GLDR) contributes to the ATP binding site.

This sequence belongs to the class-II aminoacyl-tRNA synthetase family. Type 1 subfamily. In terms of assembly, homodimer.

It localises to the cytoplasm. The enzyme catalyses tRNA(Asx) + L-aspartate + ATP = L-aspartyl-tRNA(Asx) + AMP + diphosphate. Aspartyl-tRNA synthetase with relaxed tRNA specificity since it is able to aspartylate not only its cognate tRNA(Asp) but also tRNA(Asn). Reaction proceeds in two steps: L-aspartate is first activated by ATP to form Asp-AMP and then transferred to the acceptor end of tRNA(Asp/Asn). The chain is Aspartate--tRNA(Asp/Asn) ligase from Cupriavidus metallidurans (strain ATCC 43123 / DSM 2839 / NBRC 102507 / CH34) (Ralstonia metallidurans).